The following is a 631-amino-acid chain: Probable ATP-dependent RNA helicase DDX53 (631 aa).

Positions 48–109 (EPPLCFKIKN…EMKAKAKAAI (62 aa)) constitute a KH domain. Residues 222–250 (RFKDAFQQYPDLLKSIIRVGIVKPTPIQS) carry the Q motif motif. ATP-binding positions include K244, Q249, 268–273 (TGTGKT), and H311. Residues 253 to 428 (WPIILQGIDL…LSYLKDPMIV (176 aa)) enclose the Helicase ATP-binding domain. Residues 376 to 379 (DEAD) carry the DEAD box motif. The Helicase C-terminal domain maps to 440–601 (TVKQNIIVTT…SVPEDLVVMA (162 aa)).

This sequence belongs to the DEAD box helicase family. In terms of tissue distribution, expressed in testis. Wide expression in various cancer tissues and cancer cell lines.

The protein resides in the nucleus. It carries out the reaction ATP + H2O = ADP + phosphate + H(+). In Homo sapiens (Human), this protein is Probable ATP-dependent RNA helicase DDX53 (DDX53).